Reading from the N-terminus, the 589-residue chain is NADPH-dependent diflavin oxidoreductase 1 (589 aa).

Positions 5–151 (ITILYGSETG…YYIEWEAELI (147 aa)) constitute a Flavodoxin-like domain. FMN-binding positions include 11–16 (SETGNA), 60–63 (STTG), 98–107 (VGDSSYVKYN), and Glu-133. The FAD-binding FR-type domain occupies 202–439 (DGLKLGTVLE…SIQRSSFKYK (238 aa)). Residues Arg-349, 380–383 (RMFS), and 412–415 (GVCT) contribute to the FAD site. Residues Thr-452 and 507-508 (SR) contribute to the NADP(+) site. Residue Trp-589 participates in FAD binding.

The protein belongs to the NADPH-dependent diflavin oxidoreductase NDOR1 family. It in the N-terminal section; belongs to the flavodoxin family. This sequence in the C-terminal section; belongs to the flavoprotein pyridine nucleotide cytochrome reductase family. As to quaternary structure, interacts with DRE2; as part of the cytosolic iron-sulfur (Fe-S) protein assembly (CIA) machinery. FAD serves as cofactor. It depends on FMN as a cofactor.

The protein resides in the cytoplasm. The protein localises to the mitochondrion. It catalyses the reaction 2 oxidized [2Fe-2S]-[protein] + NADPH = 2 reduced [2Fe-2S]-[protein] + NADP(+) + H(+). NADPH-dependent reductase which is a central component of the cytosolic iron-sulfur (Fe-S) protein assembly (CIA) machinery. Transfers electrons from NADPH via its FAD and FMN prosthetic groups to the [2Fe-2S] cluster of DRE2, another key component of the CIA machinery. In turn, this reduced cluster provides electrons for assembly of cytosolic iron-sulfur cluster proteins. Positively controls H(2)O(2)-induced cell death. The sequence is that of NADPH-dependent diflavin oxidoreductase 1 from Candida albicans (strain SC5314 / ATCC MYA-2876) (Yeast).